The sequence spans 196 residues: Pyroglutamyl-peptidase 1-like protein (196 aa).

Active-site residues include E65, C127, and H146.

It belongs to the peptidase C15 family.

This chain is Pyroglutamyl-peptidase 1-like protein (PGPEP1L), found in Homo sapiens (Human).